Consider the following 85-residue polypeptide: Small ribosomal subunit protein bS16c (85 aa).

Belongs to the bacterial ribosomal protein bS16 family.

It localises to the plastid. The protein localises to the chloroplast. This chain is Small ribosomal subunit protein bS16c, found in Nicotiana tabacum (Common tobacco).